A 327-amino-acid chain; its full sequence is GTP 3',8-cyclase (327 aa).

In terms of domain architecture, Radical SAM core spans 8-232 (AFARKFYYLR…LQRSRSDGPA (225 aa)). Arg-17 is a GTP binding site. [4Fe-4S] cluster is bound by residues Cys-24 and Cys-28. Position 30 (Tyr-30) interacts with S-adenosyl-L-methionine. Residue Cys-31 coordinates [4Fe-4S] cluster. Position 66 (Arg-66) interacts with GTP. Gly-70 contacts S-adenosyl-L-methionine. Thr-97 is a binding site for GTP. S-adenosyl-L-methionine is bound at residue Ser-121. Residue Lys-158 coordinates GTP. Met-192 serves as a coordination point for S-adenosyl-L-methionine. 2 residues coordinate [4Fe-4S] cluster: Cys-255 and Cys-258. 260–262 (RLR) is a GTP binding site. Position 272 (Cys-272) interacts with [4Fe-4S] cluster.

The protein belongs to the radical SAM superfamily. MoaA family. In terms of assembly, monomer and homodimer. The cofactor is [4Fe-4S] cluster.

The enzyme catalyses GTP + AH2 + S-adenosyl-L-methionine = (8S)-3',8-cyclo-7,8-dihydroguanosine 5'-triphosphate + 5'-deoxyadenosine + L-methionine + A + H(+). It functions in the pathway cofactor biosynthesis; molybdopterin biosynthesis. Its function is as follows. Catalyzes the cyclization of GTP to (8S)-3',8-cyclo-7,8-dihydroguanosine 5'-triphosphate. The chain is GTP 3',8-cyclase from Photorhabdus laumondii subsp. laumondii (strain DSM 15139 / CIP 105565 / TT01) (Photorhabdus luminescens subsp. laumondii).